The primary structure comprises 118 residues: Peptidyl-prolyl cis-trans isomerase Pin1 (118 aa).

2 disordered regions span residues 1–37 and 61–84; these read MSSEKVRASHILIKHQGSRRKSSWKDPDGSLISATTR and LASRHSHCSSAKRGGDLGPFGRGQ. A PpiC domain is found at 3 to 118; it reads SEKVRASHIL…SGVHIIKRTG (116 aa). The segment covering 12 to 22 has biased composition (basic residues); that stretch reads LIKHQGSRRKS.

Belongs to the PpiC/parvulin rotamase family. The N-terminus is blocked. As to expression, expressed in roots, stems, leaves, flowers and seedlings.

It localises to the cytoplasm. The protein localises to the nucleus. It carries out the reaction [protein]-peptidylproline (omega=180) = [protein]-peptidylproline (omega=0). Inhibited in vitro by juglone. In terms of biological role, prolyl cis/trans isomerase with specificity for phospho-Ser-Pro bonds. The protein is Peptidyl-prolyl cis-trans isomerase Pin1 (PARV12.8) of Digitalis lanata (Grecian foxglove).